A 173-amino-acid chain; its full sequence is Ribosome maturation factor RimM (173 aa).

One can recognise a PRC barrel domain in the interval 92–165 (EDEYYHTDLI…RVVVALPQEI (74 aa)).

The protein belongs to the RimM family. As to quaternary structure, binds ribosomal protein uS19.

It is found in the cytoplasm. In terms of biological role, an accessory protein needed during the final step in the assembly of 30S ribosomal subunit, possibly for assembly of the head region. Essential for efficient processing of 16S rRNA. May be needed both before and after RbfA during the maturation of 16S rRNA. It has affinity for free ribosomal 30S subunits but not for 70S ribosomes. This is Ribosome maturation factor RimM from Bradyrhizobium diazoefficiens (strain JCM 10833 / BCRC 13528 / IAM 13628 / NBRC 14792 / USDA 110).